The sequence spans 270 residues: Putative pyruvate, phosphate dikinase regulatory protein 2 (270 aa).

ADP is bound at residue 151-158 (GVSRTSKT).

This sequence belongs to the pyruvate, phosphate/water dikinase regulatory protein family. PDRP subfamily.

It catalyses the reaction N(tele)-phospho-L-histidyl/L-threonyl-[pyruvate, phosphate dikinase] + ADP = N(tele)-phospho-L-histidyl/O-phospho-L-threonyl-[pyruvate, phosphate dikinase] + AMP + H(+). The catalysed reaction is N(tele)-phospho-L-histidyl/O-phospho-L-threonyl-[pyruvate, phosphate dikinase] + phosphate + H(+) = N(tele)-phospho-L-histidyl/L-threonyl-[pyruvate, phosphate dikinase] + diphosphate. Bifunctional serine/threonine kinase and phosphorylase involved in the regulation of the pyruvate, phosphate dikinase (PPDK) by catalyzing its phosphorylation/dephosphorylation. The chain is Putative pyruvate, phosphate dikinase regulatory protein 2 from Listeria monocytogenes serovar 1/2a (strain ATCC BAA-679 / EGD-e).